The chain runs to 310 residues: UDP-N-acetylenolpyruvoylglucosamine reductase (310 aa).

In terms of domain architecture, FAD-binding PCMH-type spans 35-203 (RAGGAAEALV…TRVRFALRKG (169 aa)). Arg183 is an active-site residue. The active-site Proton donor is the Ser232. Glu302 is an active-site residue.

It belongs to the MurB family. FAD serves as cofactor.

The protein localises to the cytoplasm. The catalysed reaction is UDP-N-acetyl-alpha-D-muramate + NADP(+) = UDP-N-acetyl-3-O-(1-carboxyvinyl)-alpha-D-glucosamine + NADPH + H(+). It participates in cell wall biogenesis; peptidoglycan biosynthesis. In terms of biological role, cell wall formation. This chain is UDP-N-acetylenolpyruvoylglucosamine reductase, found in Myxococcus xanthus (strain DK1622).